Reading from the N-terminus, the 383-residue chain is Acetylornithine deacetylase (383 aa).

Residue His80 coordinates Zn(2+). Asp82 is an active-site residue. Asp112 serves as a coordination point for Zn(2+). Glu144 is a catalytic residue. Positions 145, 169, and 355 each coordinate Zn(2+).

Belongs to the peptidase M20A family. ArgE subfamily. Homodimer. Zn(2+) is required as a cofactor. Requires Co(2+) as cofactor. Glutathione serves as cofactor.

It localises to the cytoplasm. The enzyme catalyses N(2)-acetyl-L-ornithine + H2O = L-ornithine + acetate. It participates in amino-acid biosynthesis; L-arginine biosynthesis; L-ornithine from N(2)-acetyl-L-ornithine (linear): step 1/1. Catalyzes the hydrolysis of the amide bond of N(2)-acetylated L-amino acids. Cleaves the acetyl group from N-acetyl-L-ornithine to form L-ornithine, an intermediate in L-arginine biosynthesis pathway, and a branchpoint in the synthesis of polyamines. The polypeptide is Acetylornithine deacetylase (Salmonella paratyphi A (strain ATCC 9150 / SARB42)).